The chain runs to 43 residues: Hainantoxin F5-22.36 (43 aa).

Intrachain disulfides connect C1–C19, C8–C24, and C18–C38.

The protein belongs to the neurotoxin 14 (magi-1) family. 02 (HWTX-XVIc) subfamily. Expressed by the venom gland.

It localises to the secreted. Its function is as follows. Probable ion channel inhibitor. The chain is Hainantoxin F5-22.36 from Cyriopagopus hainanus (Chinese bird spider).